Reading from the N-terminus, the 93-residue chain is UPF0223 protein str0998 (93 aa).

It belongs to the UPF0223 family.

This Streptococcus thermophilus (strain CNRZ 1066) protein is UPF0223 protein str0998.